Here is a 101-residue protein sequence, read N- to C-terminus: Protein S100-A4 (101 aa).

Ala2 is subject to N-acetylalanine. EF-hand domains are found at residues 12 to 47 (IVST…SFLG) and 50 to 85 (TDEA…IAMM). Ca(2+) is bound by residues Lys28 and Glu33. Lys35 is subject to N6-acetyllysine. 5 residues coordinate Ca(2+): Asp63, Asn65, Asp67, Glu69, and Glu74.

Belongs to the S-100 family. As to quaternary structure, homodimer. Interacts with PPFIBP1 in a calcium-dependent mode. Interacts with PGLYRP1; this complex acts as a chemoattractant that promotes lymphocyte movement. Interacts with MYH9; this interaction increases cell motility. Interacts with Annexin 2/ANXA2. Interacts with TP53; this interaction promotes TP53 degradation. Interacts with CCR5 and CXCR3. Interacts with FCGR3A; this interaction inhibits PKC-dependent phosphorylation of FCGR3A.

The protein localises to the secreted. It is found in the nucleus. It localises to the cytoplasm. Calcium-binding protein that plays a role in various cellular processes including motility, angiogenesis, cell differentiation, apoptosis, and autophagy. Increases cell motility and invasiveness by interacting with non-muscle myosin heavy chain (NMMHC) IIA/MYH9. Mechanistically, promotes filament depolymerization and increases the amount of soluble myosin-IIA, resulting in the formation of stable protrusions facilitating chemotaxis. Also modulates the pro-apoptotic function of TP53 by binding to its C-terminal transactivation domain within the nucleus and reducing its protein levels. Within the extracellular space, stimulates cytokine production including granulocyte colony-stimulating factor and CCL24 from T-lymphocytes. In addition, stimulates T-lymphocyte chemotaxis by acting as a chemoattractant complex with PGLYRP1 that promotes lymphocyte migration via CCR5 and CXCR3 receptors. This chain is Protein S100-A4 (S100a4), found in Rattus norvegicus (Rat).